A 339-amino-acid chain; its full sequence is Uridylate kinase PUMPKIN, chloroplastic (339 aa).

The N-terminal 53 residues, 1–53 (MAIPLPLTSCSPISTSSSISRTSFVPLTLRNRTFFSNQNYSRRVLISCSSSLS), are a transit peptide targeting the chloroplast. Positions 52–79 (LSSDNGSSPDSMNGNGNGNGSSLNGQSS) are enriched in low complexity. The disordered stretch occupies residues 52 to 89 (LSSDNGSSPDSMNGNGNGNGSSLNGQSSFPRLPSFDGT). 102–105 (KVSG) is a binding site for ATP. The tract at residues 110–115 (GDEEQN) is involved in allosteric activation by GTP. Position 144 (Gly144) interacts with UMP. Gly145 and Arg149 together coordinate ATP. UMP is bound at residue Asp165. Residues 180–184 (QATME) and 189–191 (PTR) contribute to the ATP site. 226 to 233 (TGNPFFTT) provides a ligand contact to UMP. Thr253, Phe259, and Asp262 together coordinate ATP.

The protein belongs to the UMP kinase family. In terms of assembly, homomultimer. Homohexamer. Forms RNA-containing megadalton-sized complexes. In terms of tissue distribution, expressed exclusively in leaves, but not in roots.

It localises to the plastid. The protein localises to the chloroplast stroma. The enzyme catalyses UMP + ATP = UDP + ADP. It participates in pyrimidine metabolism; CTP biosynthesis via de novo pathway; UDP from UMP (UMPK route): step 1/1. Functionally, catalyzes the reversible phosphorylation of UMP to UDP. Required for specific post-transcriptional processes of many plastid transcripts (e.g. PSI (PsaA, PsaF), PSII (D1, CP43, CP47), Cytochrome b(6)f (Cytb(6)), ATP synthase (AtpC), LHCs (LHCa3, LHCb2), and NDH (NdhH)), thus being essential for retaining photosynthetic activity in chloroplasts. Associates with group II introns of the plastid transcripts trnG-UCC, trnV-UAC, petB, petD and ndhA to stabilize corresponding precursor RNAs. The protein is Uridylate kinase PUMPKIN, chloroplastic of Arabidopsis thaliana (Mouse-ear cress).